The following is a 206-amino-acid chain: Cytochrome c oxidase assembly factor 8 (206 aa).

The transit peptide at 1–39 (MLPCAAGARGRGAMVVLRAGKKTFLPPLCRAFACRGCQL) directs the protein to the mitochondrion.

Belongs to the COA8 family. In terms of processing, N-terminal mitochondrial targeting sequence is cleaved from the mature protein once in the mitochondrion. In normal conditions, the cytoplasmic precursor protein is rapidly degraded by the ubiquitination-proteasome system (UPS). Oxidative stress induces protein stabilization and import into mitochondria where it protects COX from degradation. In terms of tissue distribution, expressed in fibroblasts.

The protein localises to the mitochondrion inner membrane. Functionally, required for cytochrome c complex (COX) IV assembly and function Protects COX assembly from oxidation-induced degradation, COX being the terminal component of the mitochondrial respiratory chain. This chain is Cytochrome c oxidase assembly factor 8, found in Homo sapiens (Human).